Reading from the N-terminus, the 351-residue chain is 1-acylglycerol-3-phosphate O-acyltransferase ABHD5 (351 aa).

Residues 79 to 184 form the AB hydrolase-1 domain; it reads PLVLLHGFGG…LILVEPWGFP (106 aa). Serine 124 carries the phosphoserine modification. Positions 329-334 match the HXXXXD motif motif; sequence HYVYAD.

This sequence belongs to the peptidase S33 family. ABHD4/ABHD5 subfamily. As to quaternary structure, interacts with ADRP and PLIN. Interacts with PNPLA2. Interacts with PLIN5; promotes interaction with PNPLA2.

It is found in the cytoplasm. Its subcellular location is the lipid droplet. It carries out the reaction a 1-acyl-sn-glycero-3-phosphate + an acyl-CoA = a 1,2-diacyl-sn-glycero-3-phosphate + CoA. The catalysed reaction is 1-(9Z-octadecenoyl)-sn-glycero-3-phosphate + (9Z)-octadecenoyl-CoA = 1,2-di-(9Z-octadecenoyl)-sn-glycero-3-phosphate + CoA. The enzyme catalyses 1-(9Z-octadecenoyl)-sn-glycero-3-phosphate + hexadecanoyl-CoA = 1-(9Z)-octadecenoyl-2-hexadecanoyl-sn-glycero-3-phosphate + CoA. It catalyses the reaction 1-(9Z-octadecenoyl)-sn-glycero-3-phosphate + octadecanoyl-CoA = 1-(9Z-octadecenoyl)-2-octadecanoyl-sn-glycero-3-phosphate + CoA. It carries out the reaction 1-(9Z-octadecenoyl)-sn-glycero-3-phosphate + (5Z,8Z,11Z,14Z)-eicosatetraenoyl-CoA = 1-(9Z)-octadecenoyl-2-(5Z,8Z,11Z,14Z)-eicosatetraenoyl-sn-glycero-3-phosphate + CoA. The catalysed reaction is eicosanoyl-CoA + 1-(9Z-octadecenoyl)-sn-glycero-3-phosphate = 1-(9Z)-octadecenoyl-2-eicosanoyl-sn-glycero-3-phosphate + CoA. The enzyme catalyses 1-hexadecanoyl-sn-glycero-3-phosphate + (9Z)-octadecenoyl-CoA = 1-hexadecanoyl-2-(9Z-octadecenoyl)-sn-glycero-3-phosphate + CoA. It catalyses the reaction 1-octadecanoyl-sn-glycero-3-phosphate + (9Z)-octadecenoyl-CoA = 1-octadecanoyl-2-(9Z-octadecenoyl)-sn-glycero-3-phosphate + CoA. It carries out the reaction 1-(5Z,8Z,11Z,14Z-eicosatetraenoyl)-sn-glycero-3-phosphate + (9Z)-octadecenoyl-CoA = 1-(5Z,8Z,11Z,14Z)-eicosatetraenoyl-2-(9Z)-octadecenoyl-sn-glycero-3-phosphate + CoA. Acyltransferase activity is inhibited by detergents such as Triton X-100 and 3-[(3-cholamidopropyl)dimethylammonio]-1-propanesulfonate (CHAPS). Acyltransferase activity is inhibited by the presence of magnesium and calcium. Functionally, coenzyme A-dependent lysophosphatidic acid acyltransferase that catalyzes the transfer of an acyl group on a lysophosphatidic acid. Functions preferentially with 1-oleoyl-lysophosphatidic acid followed by 1-palmitoyl-lysophosphatidic acid, 1-stearoyl-lysophosphatidic acid and 1-arachidonoyl-lysophosphatidic acid as lipid acceptor. Functions preferentially with arachidonoyl-CoA followed by oleoyl-CoA as acyl group donors. Functions in phosphatidic acid biosynthesis. May regulate the cellular storage of triacylglycerol through activation of the phospholipase PNPLA2. Involved in keratinocyte differentiation. Regulates lipid droplet fusion. This Rattus norvegicus (Rat) protein is 1-acylglycerol-3-phosphate O-acyltransferase ABHD5.